Reading from the N-terminus, the 365-residue chain is Peptide chain release factor 2 (365 aa).

N5-methylglutamine is present on Gln-252.

It belongs to the prokaryotic/mitochondrial release factor family. Post-translationally, methylated by PrmC. Methylation increases the termination efficiency of RF2.

The protein resides in the cytoplasm. Peptide chain release factor 2 directs the termination of translation in response to the peptide chain termination codons UGA and UAA. The chain is Peptide chain release factor 2 (prfB) from Haemophilus influenzae (strain ATCC 51907 / DSM 11121 / KW20 / Rd).